A 750-amino-acid polypeptide reads, in one-letter code: Catalase-peroxidase (750 aa).

A cross-link (tryptophyl-tyrosyl-methioninium (Trp-Tyr) (with M-261)) is located at residues 112-235 (WHSAGTYRIG…LGAAHMGLIY (124 aa)). H113 acts as the Proton acceptor in catalysis. Positions 235 to 261 (YVNPEGHNGNPDPVEAASYIRETFGRM) form a cross-link, tryptophyl-tyrosyl-methioninium (Tyr-Met) (with W-112). Heme b is bound at residue H276.

Belongs to the peroxidase family. Peroxidase/catalase subfamily. In terms of assembly, homodimer or homotetramer. Requires heme b as cofactor. Formation of the three residue Trp-Tyr-Met cross-link is important for the catalase, but not the peroxidase activity of the enzyme.

The catalysed reaction is H2O2 + AH2 = A + 2 H2O. It catalyses the reaction 2 H2O2 = O2 + 2 H2O. Its function is as follows. Bifunctional enzyme with both catalase and broad-spectrum peroxidase activity. This is Catalase-peroxidase from Christiangramia forsetii (strain DSM 17595 / CGMCC 1.15422 / KT0803) (Gramella forsetii).